Here is a 438-residue protein sequence, read N- to C-terminus: V-type ATP synthase beta chain (438 aa).

This sequence belongs to the ATPase alpha/beta chains family.

Functionally, produces ATP from ADP in the presence of a proton gradient across the membrane. The V-type beta chain is a regulatory subunit. In Chlamydia trachomatis serovar D (strain ATCC VR-885 / DSM 19411 / UW-3/Cx), this protein is V-type ATP synthase beta chain (atpB).